Consider the following 117-residue polypeptide: Protein SMALL AUXIN UP-REGULATED RNA 54 (117 aa).

The protein belongs to the ARG7 family. In terms of tissue distribution, expressed in trichomes. Hardly observed in leaves.

Its subcellular location is the cell membrane. Functionally, provide a mechanistic link between auxin and plasma membrane H(+)-ATPases (PM H(+)-ATPases, e.g. AHA1 and AHA2), and triggers PM H(+)-ATPases activity by promoting phosphorylation of their C-terminal autoinhibitory domain as a result of PP2C-D subfamily of type 2C phosphatases inhibition, thus leading to the acidification of the apoplast and the facilitation of solutes and water uptake to drive cell expansion. Triggers plant growth probably by promoting cell elongation. Regulates branch angles and bending. This Arabidopsis thaliana (Mouse-ear cress) protein is Protein SMALL AUXIN UP-REGULATED RNA 54.